Reading from the N-terminus, the 563-residue chain is Pyruvate decarboxylase (563 aa).

Residues Asp-28 and His-115 each contribute to the pyruvate site. Residues Thr-390 and 413–415 contribute to the thiamine diphosphate site; that span reads GSI. Asp-444 serves as a coordination point for Mg(2+). Thiamine diphosphate-binding positions include 445 to 446 and 471 to 476; these read GS and NDGYTI. Mg(2+) contacts are provided by Asn-471 and Gly-473. Glu-477 is a pyruvate binding site.

It belongs to the TPP enzyme family. Homotetramer. Mg(2+) serves as cofactor. Requires thiamine diphosphate as cofactor.

The catalysed reaction is a 2-oxocarboxylate + H(+) = an aldehyde + CO2. The enzyme catalyses pyruvate + H(+) = acetaldehyde + CO2. The polypeptide is Pyruvate decarboxylase (PDC1) (Kluyveromyces lactis (strain ATCC 8585 / CBS 2359 / DSM 70799 / NBRC 1267 / NRRL Y-1140 / WM37) (Yeast)).